Reading from the N-terminus, the 365-residue chain is Phospho-N-acetylmuramoyl-pentapeptide-transferase (365 aa).

10 helical membrane passes run 2–22, 51–71, 80–100, 118–138, 167–187, 196–216, 234–254, 256–276, 277–297, and 340–360; these read ISLI…TPLL, TLGG…SALY, PSWS…LGFI, GKFI…LILP, VAIV…TNAI, LAAG…FWEF, PLDL…FLWY, SNPA…GLFA, AMSI…LFVI, and FWMI…GDWV.

Belongs to the glycosyltransferase 4 family. MraY subfamily. Mg(2+) is required as a cofactor.

The protein resides in the cell membrane. It carries out the reaction UDP-N-acetyl-alpha-D-muramoyl-L-alanyl-gamma-D-glutamyl-meso-2,6-diaminopimeloyl-D-alanyl-D-alanine + di-trans,octa-cis-undecaprenyl phosphate = di-trans,octa-cis-undecaprenyl diphospho-N-acetyl-alpha-D-muramoyl-L-alanyl-D-glutamyl-meso-2,6-diaminopimeloyl-D-alanyl-D-alanine + UMP. It participates in cell wall biogenesis; peptidoglycan biosynthesis. Its function is as follows. Catalyzes the initial step of the lipid cycle reactions in the biosynthesis of the cell wall peptidoglycan: transfers peptidoglycan precursor phospho-MurNAc-pentapeptide from UDP-MurNAc-pentapeptide onto the lipid carrier undecaprenyl phosphate, yielding undecaprenyl-pyrophosphoryl-MurNAc-pentapeptide, known as lipid I. In Bifidobacterium adolescentis (strain ATCC 15703 / DSM 20083 / NCTC 11814 / E194a), this protein is Phospho-N-acetylmuramoyl-pentapeptide-transferase.